Reading from the N-terminus, the 142-residue chain is Large ribosomal subunit protein uL13 (142 aa).

It belongs to the universal ribosomal protein uL13 family. In terms of assembly, part of the 50S ribosomal subunit.

Its function is as follows. This protein is one of the early assembly proteins of the 50S ribosomal subunit, although it is not seen to bind rRNA by itself. It is important during the early stages of 50S assembly. This Caldicellulosiruptor bescii (strain ATCC BAA-1888 / DSM 6725 / KCTC 15123 / Z-1320) (Anaerocellum thermophilum) protein is Large ribosomal subunit protein uL13.